The sequence spans 331 residues: Hyaluronidase (331 aa).

2 cysteine pairs are disulfide-bonded: cysteine 19/cysteine 308 and cysteine 185/cysteine 197. N-linked (GlcNAc...) asparagine glycosylation is present at asparagine 79. Glutamate 109 functions as the Proton donor in the catalytic mechanism. Asparagine 325 carries N-linked (GlcNAc...) asparagine glycosylation.

The protein belongs to the glycosyl hydrolase 56 family. Expressed by the venom gland.

Its subcellular location is the secreted. It catalyses the reaction Random hydrolysis of (1-&gt;4)-linkages between N-acetyl-beta-D-glucosamine and D-glucuronate residues in hyaluronate.. In terms of biological role, hydrolyzes high molecular weight hyaluronic acid to produce small oligosaccharides. The polypeptide is Hyaluronidase (Dolichovespula maculata (Bald-faced hornet)).